Here is a 658-residue protein sequence, read N- to C-terminus: Pro-secreted protein ORF2 (658 aa).

The N-terminal stretch at 1 to 19 is a signal peptide; it reads MRSRALLFLLFVLLPMLPA. Positions 62-124 are disordered; it reads SDIPAAAGTG…PDTAPVPDAD (63 aa). A compositionally biased stretch (low complexity) spans 91 to 122; sequence RPAASTRRRPAPAGASPLTAVAPAPDTAPVPD. Residues asparagine 135 and asparagine 308 are each glycosylated (N-linked (GlcNAc...) asparagine; by host). Positions 366-392 are particle formation; the sequence is IALTLFNLADTLLGGLPTELISSAGGQ. Asparagine 560 is a glycosylation site (N-linked (GlcNAc...) asparagine; by host). Residues 583–608 form an oligomerization region; sequence TTNLGSGPVSVSAVGVLAPHSALAAL.

The protein belongs to the hepevirus capsid protein family. Homodimer. As to quaternary structure, self-assembles to form the capsid. The capsid is dominated by dimers that define the 30 morphological units. Interacts with phosphorylated protein ORF3. Interacts with host TMEM134. Interacts with host ASGR1 and ASGR2; these interactions facilitate infection of host hepatocytes. Post-translationally, cleaved by host protease in the N-terminus. In terms of processing, N-glycosylated. Not N-glycosylated. The C-terminus of the capsid protein ORF2 is truncated in non-enveloped virions shedded in feces, probably due to host proteases.

The protein resides in the secreted. The protein localises to the virion. It is found in the host cytoplasm. It localises to the host endoplasmic reticulum. Its subcellular location is the host Golgi apparatus. The protein resides in the host cell surface. The protein localises to the host nucleus. Functionally, plays a role in the inhibition of host antibody-mediated neutralization without blocking viral cell entry. Its function is as follows. Forms an icosahedral capsid with a T=1 symmetry and a 34 nm diameter. The capsid is composed of 60 copies linked to each other. Binds to the 5' end of the genomic RNA to mediate genome encapsidation. Binds to heparin surface proteoglycans (HSPGs) to mediate viral entry. Additionally, the interactions with host ASGR1 and ASGR2 facilitate viral infection of hepatocytes. Inhibits IFN production by blocking host TBK1-induced IRF3 phosphorylation. The nuclear form probably modulates host gene expression. This Bandicota bengalensis (lesser bandicoot rat) protein is Pro-secreted protein ORF2.